Consider the following 518-residue polypeptide: Glutamate--cysteine ligase (518 aa).

It belongs to the glutamate--cysteine ligase type 1 family. Type 1 subfamily.

It catalyses the reaction L-cysteine + L-glutamate + ATP = gamma-L-glutamyl-L-cysteine + ADP + phosphate + H(+). It participates in sulfur metabolism; glutathione biosynthesis; glutathione from L-cysteine and L-glutamate: step 1/2. This is Glutamate--cysteine ligase from Shigella flexneri serotype 5b (strain 8401).